Reading from the N-terminus, the 361-residue chain is Chorismate synthase (361 aa).

A compositionally biased stretch (basic and acidic residues) spans 38 to 49 (EKDMQHDLDRRR). The segment at 38 to 58 (EKDMQHDLDRRRPGTSKYTTQ) is disordered. Arg48 lines the NADP(+) pocket. FMN-binding positions include 125 to 127 (RSS), 238 to 239 (NA), Gly278, 293 to 297 (KPTSS), and Arg319.

The protein belongs to the chorismate synthase family. Homotetramer. It depends on FMNH2 as a cofactor.

The enzyme catalyses 5-O-(1-carboxyvinyl)-3-phosphoshikimate = chorismate + phosphate. It participates in metabolic intermediate biosynthesis; chorismate biosynthesis; chorismate from D-erythrose 4-phosphate and phosphoenolpyruvate: step 7/7. In terms of biological role, catalyzes the anti-1,4-elimination of the C-3 phosphate and the C-6 proR hydrogen from 5-enolpyruvylshikimate-3-phosphate (EPSP) to yield chorismate, which is the branch point compound that serves as the starting substrate for the three terminal pathways of aromatic amino acid biosynthesis. This reaction introduces a second double bond into the aromatic ring system. The sequence is that of Chorismate synthase from Photobacterium profundum (strain SS9).